Consider the following 327-residue polypeptide: Delta(6)-protoilludene synthase HYPSUDRAFT_138665 (327 aa).

Mg(2+)-binding residues include D79, N215, S219, and E223. A DDXXD motif motif is present at residues 79–83; the sequence is DEHTD. R304 and Y305 together coordinate (2E,6E)-farnesyl diphosphate.

This sequence belongs to the terpene synthase family. The cofactor is Mg(2+).

The enzyme catalyses (2E,6E)-farnesyl diphosphate = Delta(6)-protoilludene + diphosphate. Its function is as follows. Terpene cyclase that catalyzes the cyclization of farnesyl diphosphate (FPP) to delta(6)-protoilludene. The chain is Delta(6)-protoilludene synthase HYPSUDRAFT_138665 from Hypholoma sublateritium (strain FD-334 SS-4).